Reading from the N-terminus, the 492-residue chain is Linolenate hydroperoxide lyase, chloroplastic (492 aa).

Positions methionine 1–leucine 33 are disordered. The N-terminal 34 residues, methionine 1–arginine 34, are a transit peptide targeting the chloroplast. Cysteine 454 lines the heme pocket.

The protein belongs to the cytochrome P450 family. Heme is required as a cofactor. Expressed in roots, leaves, flowers and siliques.

The protein resides in the plastid. The protein localises to the chloroplast. Catalyzes the conversion of (9Z,11E,15Z)-(13S)-hydroperoxyoctadeca-9,11,15-trienoate to (9Z)-12-oxo-dodec-9-enoate and cis-3-hexenal. Possesses low activity toward (9Z,11E)-(13S)-13-hydroperoxyoctadeca-9,11-dienoate. Required for the synthesis of the green leaf volatiles (GLVs) hexanal and trans-2-hexenal. The sequence is that of Linolenate hydroperoxide lyase, chloroplastic from Arabidopsis thaliana (Mouse-ear cress).